Here is a 142-residue protein sequence, read N- to C-terminus: Large ribosomal subunit protein uL13 (142 aa).

The protein belongs to the universal ribosomal protein uL13 family. As to quaternary structure, part of the 50S ribosomal subunit.

This protein is one of the early assembly proteins of the 50S ribosomal subunit, although it is not seen to bind rRNA by itself. It is important during the early stages of 50S assembly. The polypeptide is Large ribosomal subunit protein uL13 (Actinobacillus pleuropneumoniae serotype 5b (strain L20)).